A 145-amino-acid chain; its full sequence is UPF0735 ACT domain-containing protein CPE1414 (145 aa).

The region spanning 69–144 (IFNMVVTHEK…GVEKVEFVAM (76 aa)) is the ACT domain.

The protein belongs to the UPF0735 family.

The protein is UPF0735 ACT domain-containing protein CPE1414 of Clostridium perfringens (strain 13 / Type A).